We begin with the raw amino-acid sequence, 1017 residues long: Rho-GTPase-activating protein LRG1 (1017 aa).

At methionine 1 the chain carries N-acetylmethionine. 2 consecutive LIM zinc-binding domains span residues 28–88 (CARC…LCQY) and 98–148 (CHVC…CKYH). An LIM zinc-binding 3; truncated domain is found at 155 to 184 (KRCKGCEFPISDQYIEFPKGEEIHCWHPEC). The 56-residue stretch at 419 to 474 (CAGCNKYIQEECIQFYEHRWHIACFTCSSCHKNINPRSLTDPTFNKEKKKILCSHC) folds into the LIM zinc-binding 4 domain. Residue serine 562 is modified to Phosphoserine. The disordered stretch occupies residues 570 to 602 (TDLNDPTKQGDSKNLVIQTDDPSSSQQVSTREN). Residues 584–602 (LVIQTDDPSSSQQVSTREN) are compositionally biased toward polar residues. One can recognise a Rho-GAP domain in the interval 730–953 (APLDVLCEKW…YLITHNEEMA (224 aa)).

As to quaternary structure, interacts with CDC42, RHO1 and RHO2.

It is found in the cytoplasm. It localises to the bud. Its subcellular location is the bud neck. In terms of biological role, acts in signal transduction. Activates CDC42, RHO1 and RHO2. Negatively regulates 1,3-beta-glucan synthesis. May be responsible for the down-regulation of CDC42 during mating. The sequence is that of Rho-GTPase-activating protein LRG1 (LRG1) from Saccharomyces cerevisiae (strain ATCC 204508 / S288c) (Baker's yeast).